The sequence spans 173 residues: Nicotinamide-nucleotide adenylyltransferase (173 aa).

The protein belongs to the archaeal NMN adenylyltransferase family.

The protein localises to the cytoplasm. The catalysed reaction is beta-nicotinamide D-ribonucleotide + ATP + H(+) = diphosphate + NAD(+). The protein operates within cofactor biosynthesis; NAD(+) biosynthesis; NAD(+) from nicotinamide D-ribonucleotide: step 1/1. The polypeptide is Nicotinamide-nucleotide adenylyltransferase (Methanosarcina acetivorans (strain ATCC 35395 / DSM 2834 / JCM 12185 / C2A)).